A 369-amino-acid polypeptide reads, in one-letter code: UDP-N-acetylglucosamine--N-acetylmuramyl-(pentapeptide) pyrophosphoryl-undecaprenol N-acetylglucosamine transferase (369 aa).

Residues 15-17 (TGG), Asn-126, Arg-169, Ser-197, and Gln-299 each bind UDP-N-acetyl-alpha-D-glucosamine.

This sequence belongs to the glycosyltransferase 28 family. MurG subfamily.

Its subcellular location is the cell inner membrane. It catalyses the reaction di-trans,octa-cis-undecaprenyl diphospho-N-acetyl-alpha-D-muramoyl-L-alanyl-D-glutamyl-meso-2,6-diaminopimeloyl-D-alanyl-D-alanine + UDP-N-acetyl-alpha-D-glucosamine = di-trans,octa-cis-undecaprenyl diphospho-[N-acetyl-alpha-D-glucosaminyl-(1-&gt;4)]-N-acetyl-alpha-D-muramoyl-L-alanyl-D-glutamyl-meso-2,6-diaminopimeloyl-D-alanyl-D-alanine + UDP + H(+). The protein operates within cell wall biogenesis; peptidoglycan biosynthesis. Its function is as follows. Cell wall formation. Catalyzes the transfer of a GlcNAc subunit on undecaprenyl-pyrophosphoryl-MurNAc-pentapeptide (lipid intermediate I) to form undecaprenyl-pyrophosphoryl-MurNAc-(pentapeptide)GlcNAc (lipid intermediate II). This is UDP-N-acetylglucosamine--N-acetylmuramyl-(pentapeptide) pyrophosphoryl-undecaprenol N-acetylglucosamine transferase from Methylorubrum extorquens (strain CM4 / NCIMB 13688) (Methylobacterium extorquens).